The following is a 76-amino-acid chain: MSENKASDFVVIKAIDNGVNVIGLTRGSDTRFHHSEKLDKGEVIIAQFTEHTSAIKVRGDAVIQTSFGEIQSEAKK.

The protein belongs to the MtrB family. In terms of assembly, oligomer of 11 identical subunits arranged in doughnut-like structure.

Required for transcription attenuation control in the Trp operon. This trans-acting factor seems to recognize a 10 bases nucleotide sequence in the Trp leader transcript causing transcription termination. Binds the leader RNA only in presence of L-tryptophan. This is Transcription attenuation protein MtrB (mtrB) from Bacillus pumilus (Bacillus mesentericus).